Here is a 101-residue protein sequence, read N- to C-terminus: NADH-quinone oxidoreductase subunit K (101 aa).

A run of 3 helical transmembrane segments spans residues 4–24 (LSDY…GIFV), 29–49 (IITL…NFVA), and 61–81 (IFVF…LAIL).

The protein belongs to the complex I subunit 4L family. NDH-1 is composed of 14 different subunits. Subunits NuoA, H, J, K, L, M, N constitute the membrane sector of the complex.

The protein resides in the cell inner membrane. It catalyses the reaction a quinone + NADH + 5 H(+)(in) = a quinol + NAD(+) + 4 H(+)(out). NDH-1 shuttles electrons from NADH, via FMN and iron-sulfur (Fe-S) centers, to quinones in the respiratory chain. The immediate electron acceptor for the enzyme in this species is believed to be ubiquinone. Couples the redox reaction to proton translocation (for every two electrons transferred, four hydrogen ions are translocated across the cytoplasmic membrane), and thus conserves the redox energy in a proton gradient. This chain is NADH-quinone oxidoreductase subunit K, found in Ruthia magnifica subsp. Calyptogena magnifica.